The primary structure comprises 87 residues: Small ribosomal subunit protein bS20 (87 aa).

The span at 1 to 11 (MANIKSAKKRA) shows a compositional bias: basic residues. The disordered stretch occupies residues 1–27 (MANIKSAKKRAVQSEKRRQHNASQRSM).

This sequence belongs to the bacterial ribosomal protein bS20 family.

Functionally, binds directly to 16S ribosomal RNA. The protein is Small ribosomal subunit protein bS20 of Actinobacillus succinogenes (strain ATCC 55618 / DSM 22257 / CCUG 43843 / 130Z).